Consider the following 236-residue polypeptide: Small ribosomal subunit protein uS3 (236 aa).

The region spanning 39–107 (VREFLKKSLS…PAQISITEIK (69 aa)) is the KH type-2 domain.

Belongs to the universal ribosomal protein uS3 family. Part of the 30S ribosomal subunit. Forms a tight complex with proteins S10 and S14.

Functionally, binds the lower part of the 30S subunit head. Binds mRNA in the 70S ribosome, positioning it for translation. In Wigglesworthia glossinidia brevipalpis, this protein is Small ribosomal subunit protein uS3.